Reading from the N-terminus, the 193-residue chain is dTTP/UTP pyrophosphatase (193 aa).

Aspartate 68 (proton acceptor) is an active-site residue.

The protein belongs to the Maf family. YhdE subfamily. A divalent metal cation is required as a cofactor.

The protein localises to the cytoplasm. It catalyses the reaction dTTP + H2O = dTMP + diphosphate + H(+). The catalysed reaction is UTP + H2O = UMP + diphosphate + H(+). Nucleoside triphosphate pyrophosphatase that hydrolyzes dTTP and UTP. May have a dual role in cell division arrest and in preventing the incorporation of modified nucleotides into cellular nucleic acids. In Ruegeria sp. (strain TM1040) (Silicibacter sp.), this protein is dTTP/UTP pyrophosphatase.